Consider the following 61-residue polypeptide: Small ribosomal subunit protein uS14 (61 aa).

Positions 24, 27, 40, and 43 each coordinate Zn(2+).

It belongs to the universal ribosomal protein uS14 family. Zinc-binding uS14 subfamily. In terms of assembly, part of the 30S ribosomal subunit. Contacts proteins S3 and S10. Zn(2+) is required as a cofactor.

Binds 16S rRNA, required for the assembly of 30S particles and may also be responsible for determining the conformation of the 16S rRNA at the A site. This Finegoldia magna (strain ATCC 29328 / DSM 20472 / WAL 2508) (Peptostreptococcus magnus) protein is Small ribosomal subunit protein uS14.